The sequence spans 272 residues: PHD finger protein ALFIN-LIKE 6 (272 aa).

Gly residues predominate over residues 1–23 (MEGGGGGGGGGGGGGGGGGGGGA). Disordered regions lie at residues 1 to 24 (MEGG…GGAP) and 162 to 218 (QAKE…DNTL). Over residues 168-182 (PNSSSKSNKPSSKVQ) the composition is skewed to low complexity. Residues 183-200 (SKAESRSKSKLSAPKDEE) show a composition bias toward basic and acidic residues. The span at 201–214 (GSGDDEGEEEEDDH) shows a compositional bias: acidic residues. The PHD-type zinc finger occupies 216–268 (NTLCGTCGTNDGKDEFWICCDNCEKWYHGKCVKITPARAEHIKQYKCPDCTNK).

It belongs to the Alfin family.

Its subcellular location is the nucleus. Histone-binding component that specifically recognizes H3 tails trimethylated on 'Lys-4' (H3K4me3), which mark transcription start sites of virtually all active genes. This chain is PHD finger protein ALFIN-LIKE 6, found in Oryza sativa subsp. indica (Rice).